Consider the following 335-residue polypeptide: UDP-3-O-acylglucosamine N-acyltransferase (335 aa).

H225 serves as the catalytic Proton acceptor.

It belongs to the transferase hexapeptide repeat family. LpxD subfamily. As to quaternary structure, homotrimer.

The catalysed reaction is a UDP-3-O-[(3R)-3-hydroxyacyl]-alpha-D-glucosamine + a (3R)-hydroxyacyl-[ACP] = a UDP-2-N,3-O-bis[(3R)-3-hydroxyacyl]-alpha-D-glucosamine + holo-[ACP] + H(+). Its pathway is bacterial outer membrane biogenesis; LPS lipid A biosynthesis. Its function is as follows. Catalyzes the N-acylation of UDP-3-O-acylglucosamine using 3-hydroxyacyl-ACP as the acyl donor. Is involved in the biosynthesis of lipid A, a phosphorylated glycolipid that anchors the lipopolysaccharide to the outer membrane of the cell. The chain is UDP-3-O-acylglucosamine N-acyltransferase from Delftia acidovorans (strain DSM 14801 / SPH-1).